We begin with the raw amino-acid sequence, 588 residues long: Histone deacetylase 9 (588 aa).

S22 is subject to Phosphoserine. The interval 23–27 (PLDLR) is interaction with CTBP1. The segment covering 110–147 (RQEQEVERHRREQQLPPLRGKDRGRERAVASTEVKQKL) has biased composition (basic and acidic residues). 3 disordered regions span residues 110–170 (RQEQ…HSVG), 183–242 (TSLD…SSPL), and 264–301 (SSVS…PHPE). The interval 136–154 (RAVASTEVKQKLQEFLLSK) is interaction with MEF2. Composition is skewed to polar residues over residues 154–166 (KSAT…NGKN) and 185–199 (LDQS…SPSY). The segment at 175–343 (LWYTAAHHTS…LPAVPSPLNA (169 aa)) is interaction with MAPK10. Basic and acidic residues predominate over residues 208–219 (DSKDDFPLRKTA). Residues 218–261 (TASEPNLKVRSRLKQKVAERRSSPLLRRKDGNLVTSFKKRVFEV) are interaction with ETV6. Residue S220 is modified to Phosphoserine. Over residues 233–242 (KVAERRSSPL) the composition is skewed to basic and acidic residues. S240 is modified (phosphoserine; by DYRK1B). Low complexity predominate over residues 264–284 (SSVSSSSPGSGPSSPNNGPAG). The residue at position 450 (S450) is a Phosphoserine. The segment at 493 to 533 (QLKQPGSHLEEAEEELQGDQSMEDRAASKDNSARSDSSACV) is disordered. A compositionally biased stretch (basic and acidic residues) spans 514-525 (MEDRAASKDNSA). S552 is subject to Phosphoserine.

This sequence belongs to the histone deacetylase family. HD type 2 subfamily. As to quaternary structure, homodimer. Interacts with ETV6. Interacts with MEF2, HDAC1, HDAC3, HDAC4, HDAC5, CTBP1 and MAPK10. The phosphorylated form interacts with 14-3-3. Interacts with FOXP3 in the absence of T-cell stimulation. Post-translationally, sumoylated. In terms of processing, phosphorylated on Ser-220 and Ser-450; which promotes 14-3-3-binding, impairs interaction with MEF2, and antagonizes antimyogenic activity. Phosphorylated on Ser-240 by DYRK1B; which impairs nuclear accumulation. Phosphorylated by the PKC kinases PKN1 and PKN2, impairing nuclear import. As to expression, expressed at high levels in heart, brain and spleen. Expressed in skeletal muscle.

Its subcellular location is the nucleus. It carries out the reaction N(6)-acetyl-L-lysyl-[histone] + H2O = L-lysyl-[histone] + acetate. Devoided of intrinsic deacetylase activity, promotes the deacetylation of lysine residues on the N-terminal part of the core histones (H2A, H2B, H3 and H4) by recruiting HDAC1 and HDAC3. Histone deacetylation gives a tag for epigenetic repression and plays an important role in transcriptional regulation, cell cycle progression and developmental events. Represses MEF2-dependent transcription, inhibits skeletal myogenesis and may be involved in heart development. Protects neurons from apoptosis, both by inhibiting JUN phosphorylation by MAPK10 and by repressing JUN transcription via HDAC1 recruitment to JUN promoter. This is Histone deacetylase 9 (Hdac9) from Mus musculus (Mouse).